The chain runs to 241 residues: Biosynthetic peptidoglycan transglycosylase (241 aa).

A helical membrane pass occupies residues 18–38; it reads GVIGIIALWMAGILIFAFLPV.

Belongs to the glycosyltransferase 51 family.

It localises to the cell inner membrane. The enzyme catalyses [GlcNAc-(1-&gt;4)-Mur2Ac(oyl-L-Ala-gamma-D-Glu-L-Lys-D-Ala-D-Ala)](n)-di-trans,octa-cis-undecaprenyl diphosphate + beta-D-GlcNAc-(1-&gt;4)-Mur2Ac(oyl-L-Ala-gamma-D-Glu-L-Lys-D-Ala-D-Ala)-di-trans,octa-cis-undecaprenyl diphosphate = [GlcNAc-(1-&gt;4)-Mur2Ac(oyl-L-Ala-gamma-D-Glu-L-Lys-D-Ala-D-Ala)](n+1)-di-trans,octa-cis-undecaprenyl diphosphate + di-trans,octa-cis-undecaprenyl diphosphate + H(+). It functions in the pathway cell wall biogenesis; peptidoglycan biosynthesis. Its function is as follows. Peptidoglycan polymerase that catalyzes glycan chain elongation from lipid-linked precursors. This Yersinia pseudotuberculosis serotype IB (strain PB1/+) protein is Biosynthetic peptidoglycan transglycosylase.